The chain runs to 372 residues: Glutamate 5-kinase (372 aa).

Lys14 lines the ATP pocket. The substrate site is built by Ser54, Asp141, and Asn153. 173–174 (TD) lines the ATP pocket. One can recognise a PUA domain in the interval 280–358 (RGTLVLDDGA…DAIESLLGYS (79 aa)).

This sequence belongs to the glutamate 5-kinase family.

It localises to the cytoplasm. The catalysed reaction is L-glutamate + ATP = L-glutamyl 5-phosphate + ADP. It functions in the pathway amino-acid biosynthesis; L-proline biosynthesis; L-glutamate 5-semialdehyde from L-glutamate: step 1/2. Its function is as follows. Catalyzes the transfer of a phosphate group to glutamate to form L-glutamate 5-phosphate. The polypeptide is Glutamate 5-kinase (Pseudomonas entomophila (strain L48)).